Here is a 364-residue protein sequence, read N- to C-terminus: Succinate--CoA ligase [ADP-forming] subunit beta (364 aa).

Residues 9–229 form the ATP-grasp domain; that stretch reads KNIFKKYGIP…EFEEYKNKEK (221 aa). ATP-binding positions include lysine 43, 50–52, glutamate 89, leucine 92, and glutamate 97; that span reads GRG. Mg(2+)-binding residues include asparagine 189 and aspartate 203. Substrate-binding positions include asparagine 246 and 303-305; that span reads GIT.

The protein belongs to the succinate/malate CoA ligase beta subunit family. Heterotetramer of two alpha and two beta subunits. Mg(2+) is required as a cofactor.

The catalysed reaction is succinate + ATP + CoA = succinyl-CoA + ADP + phosphate. It catalyses the reaction GTP + succinate + CoA = succinyl-CoA + GDP + phosphate. The protein operates within carbohydrate metabolism; tricarboxylic acid cycle; succinate from succinyl-CoA (ligase route): step 1/1. Its function is as follows. Succinyl-CoA synthetase functions in the citric acid cycle (TCA), coupling the hydrolysis of succinyl-CoA to the synthesis of either ATP or GTP and thus represents the only step of substrate-level phosphorylation in the TCA. The beta subunit provides nucleotide specificity of the enzyme and binds the substrate succinate, while the binding sites for coenzyme A and phosphate are found in the alpha subunit. This chain is Succinate--CoA ligase [ADP-forming] subunit beta, found in Methanocaldococcus jannaschii (strain ATCC 43067 / DSM 2661 / JAL-1 / JCM 10045 / NBRC 100440) (Methanococcus jannaschii).